Consider the following 161-residue polypeptide: Allophycocyanin beta chain (161 aa).

At N71 the chain carries N4-methylasparagine. C81 contributes to the (2R,3E)-phycocyanobilin binding site.

This sequence belongs to the phycobiliprotein family. Heterodimer of an alpha and a beta chain. In terms of processing, contains one covalently linked phycocyanobilin chromophore.

The protein localises to the cellular thylakoid membrane. Its function is as follows. Light-harvesting photosynthetic bile pigment-protein from the phycobiliprotein complex. Allophycocyanin has a maximum absorption at approximately 650 nanometers. The chain is Allophycocyanin beta chain (apcB) from Anabaena cylindrica.